The primary structure comprises 291 residues: Serine/threonine-protein phosphatase Pgam5, mitochondrial (291 aa).

Residues 7 to 23 (FACGTGAGLAAFYLQRL) form a helical membrane-spanning segment. Residues 59-78 (KSLVRPQKNEQPQEQNRYNS) form a disordered region. Positions 67 to 77 (NEQPQEQNRYN) are enriched in polar residues.

This sequence belongs to the phosphoglycerate mutase family. BPG-dependent PGAM subfamily. As to quaternary structure, interacts with Pk92B/ASK1.

It localises to the mitochondrion outer membrane. It carries out the reaction O-phospho-L-seryl-[protein] + H2O = L-seryl-[protein] + phosphate. The catalysed reaction is O-phospho-L-threonyl-[protein] + H2O = L-threonyl-[protein] + phosphate. Its function is as follows. Displays phosphatase activity for serine/threonine residues, and dephosphorylates and activates Pk92B kinase. Has apparently no phosphoglycerate mutase activity. This Drosophila willistoni (Fruit fly) protein is Serine/threonine-protein phosphatase Pgam5, mitochondrial.